The sequence spans 1327 residues: uncharacterized protein (1327 aa).

Residue tryptophan 884–aspartate 885 coordinates substrate. Residue glutamate 1023 is the Proton donor of the active site. Lysine 1143–glutamine 1144 serves as a coordination point for substrate.

This sequence in the N-terminal section; belongs to the trehalose phosphatase family. In the C-terminal section; belongs to the glycosyl hydrolase 65 family.

This is an uncharacterized protein from Mycobacterium tuberculosis (strain CDC 1551 / Oshkosh).